Consider the following 107-residue polypeptide: NADH-quinone oxidoreductase subunit K 2 (107 aa).

3 consecutive transmembrane segments (helical) span residues 3–23, 30–50, and 67–87; these read LPIY…LWGA, VRIL…LITF, and ILTL…LAII.

This sequence belongs to the complex I subunit 4L family. In terms of assembly, NDH-1 is composed of 14 different subunits. Subunits NuoA, H, J, K, L, M, N constitute the membrane sector of the complex.

It localises to the cell membrane. The catalysed reaction is a quinone + NADH + 5 H(+)(in) = a quinol + NAD(+) + 4 H(+)(out). NDH-1 shuttles electrons from NADH, via FMN and iron-sulfur (Fe-S) centers, to quinones in the respiratory chain. The immediate electron acceptor for the enzyme in this species is believed to be a menaquinone. Couples the redox reaction to proton translocation (for every two electrons transferred, four hydrogen ions are translocated across the cytoplasmic membrane), and thus conserves the redox energy in a proton gradient. The sequence is that of NADH-quinone oxidoreductase subunit K 2 from Symbiobacterium thermophilum (strain DSM 24528 / JCM 14929 / IAM 14863 / T).